A 1595-amino-acid polypeptide reads, in one-letter code: A disintegrin and metalloproteinase with thrombospondin motifs 7 (1595 aa).

Positions Met-1–Gly-20 are cleaved as a signal peptide. The propeptide occupies Pro-21–Arg-217. 2 N-linked (GlcNAc...) asparagine glycosylation sites follow: Asn-84 and Asn-105. The disordered stretch occupies residues Pro-165–Ser-218. The short motif at Gly-189–Ser-196 is the Cysteine switch element. Zn(2+) is bound at residue Cys-191. A compositionally biased stretch (basic and acidic residues) spans Glu-198–Gln-210. The region spanning Lys-223–Pro-434 is the Peptidase M12B domain. Disulfide bonds link Cys-299/Cys-353, Cys-328/Cys-335, Cys-347/Cys-429, Cys-386/Cys-413, Cys-456/Cys-479, Cys-467/Cys-485, Cys-474/Cys-504, Cys-498/Cys-509, Cys-532/Cys-569, Cys-536/Cys-574, and Cys-547/Cys-559. His-369 serves as a coordination point for Zn(2+). Glu-370 is a catalytic residue. The Zn(2+) site is built by His-373 and His-379. Residues Val-444–Val-519 form the Disintegrin domain. The TSP type-1 1 domain maps to Asp-520 to Pro-575. The N-linked (GlcNAc...) asparagine glycan is linked to Asn-619. Residues His-680 to Gln-791 form a spacer region. TSP type-1 domains lie at Pro-801 to Pro-860, Ala-861 to Tyr-917, and Cys-922 to Gln-975. Disordered regions lie at residues Gly-989–Pro-1035, Pro-1077–Pro-1121, Arg-1179–Asp-1234, and Lys-1255–Asp-1315. Composition is skewed to pro residues over residues Gln-1005–Ser-1015 and His-1079–Ser-1089. A compositionally biased stretch (low complexity) spans Ser-1220 to Ser-1232. A compositionally biased stretch (polar residues) spans Gln-1268–Pro-1280. TSP type-1 domains are found at residues Lys-1320 to His-1368, Pro-1371 to Leu-1431, Trp-1433 to Thr-1476, and Pro-1478 to Glu-1538. Residues Glu-1541–Ser-1581 enclose the PLAC domain.

As to quaternary structure, interacts with COMP. Zn(2+) is required as a cofactor. Glycosylated. Can be O-fucosylated by POFUT2 on a serine or a threonine residue found within the consensus sequence C1-X(2)-(S/T)-C2-G of the TSP type-1 repeat domains where C1 and C2 are the first and second cysteine residue of the repeat, respectively. Fucosylated repeats can then be further glycosylated by the addition of a beta-1,3-glucose residue by the glucosyltransferase, B3GALTL. Fucosylation mediates the efficient secretion of ADAMTS family members. Can also be C-glycosylated with one or two mannose molecules on tryptophan residues within the consensus sequence W-X-X-W of the TPRs. N- and C-glycosylations can also facilitate secretion. Post-translationally, O-glycosylated proteoglycan; contains chondroitin sulfate. In terms of processing, may be cleaved by a furin endopeptidase. The precursor is sequentially processed. Detected in liver, ovary, kidney, testicle, lung and embryo.

It localises to the secreted. It is found in the extracellular space. The protein resides in the extracellular matrix. Its function is as follows. Metalloprotease. Was previously shown to degrade COMP. However, a later study found no activity against COMP. In Rattus norvegicus (Rat), this protein is A disintegrin and metalloproteinase with thrombospondin motifs 7 (Adamts7).